Consider the following 277-residue polypeptide: F420-dependent methylenetetrahydromethanopterin dehydrogenase (277 aa).

The interval 249–277 (EKATDSVSRKPHGADGKRLNKTKLMEKPE) is disordered.

Belongs to the MTD family.

The enzyme catalyses 5,10-methylenetetrahydromethanopterin + oxidized coenzyme F420-(gamma-L-Glu)(n) + 2 H(+) = 5,10-methenyl-5,6,7,8-tetrahydromethanopterin + reduced coenzyme F420-(gamma-L-Glu)(n). It functions in the pathway one-carbon metabolism; methanogenesis from CO(2); 5,10-methylene-5,6,7,8-tetrahydromethanopterin from 5,10-methenyl-5,6,7,8-tetrahydromethanopterin (coenzyme F420 route): step 1/1. Functionally, catalyzes the reversible reduction of methenyl-H(4)MPT(+) to methylene-H(4)MPT. The protein is F420-dependent methylenetetrahydromethanopterin dehydrogenase of Methanococcus aeolicus (strain ATCC BAA-1280 / DSM 17508 / OCM 812 / Nankai-3).